A 262-amino-acid polypeptide reads, in one-letter code: uncharacterized protein (262 aa).

Transmembrane regions (helical) follow at residues 42–62 (IAKF…TVLN), 71–91 (IINI…LLYF), 115–135 (IGLA…MELI), 145–165 (VVSY…CCFN), 185–205 (LWAY…YSNH), 206–226 (PLMI…PFMI), and 235–255 (AYPS…NYAI).

Its subcellular location is the membrane. This is an uncharacterized protein from Acanthamoeba polyphaga mimivirus (APMV).